Consider the following 1014-residue polypeptide: SUMO-specific isopeptidase USPL1 (1014 aa).

2 disordered regions span residues 137–158 (TFTD…EEQP) and 275–318 (EEKP…VSDE). Over residues 275 to 289 (EEKPVSLVHTEDQHL) the composition is skewed to basic and acidic residues. Positions 355-636 (LFWKNEENMC…EFHILFWETD (282 aa)) constitute a USP domain. The active-site Nucleophile is the Cys364. The tract at residues 364 to 631 (CWLDAMLVML…PFPSSEFHIL (268 aa)) is SUMO-binding. Catalysis depends on His592, which acts as the Proton acceptor. Disordered stretches follow at residues 794 to 823 (HPSF…YDKH) and 844 to 867 (NSQP…AGQE). Residues 802–815 (IRPPPPLPPAPKPK) are compositionally biased toward pro residues.

This sequence belongs to the peptidase C19 family.

The protein resides in the nucleus. Its subcellular location is the cajal body. In terms of biological role, SUMO-specific isopeptidase involved in protein desumoylation. Specifically binds SUMO proteins with a higher affinity for sumo2 and sumo3 which it cleaves more efficiently. Also able to process full-length SUMO proteins to their mature forms. Plays a key role in RNA polymerase-II-mediated snRNA transcription in the Cajal bodies. Is a component of complexes that can bind to U snRNA genes. This chain is SUMO-specific isopeptidase USPL1 (uspl1), found in Danio rerio (Zebrafish).